We begin with the raw amino-acid sequence, 155 residues long: 3-hydroxyacyl-[acyl-carrier-protein] dehydratase FabZ (155 aa).

Residue His-57 is part of the active site.

It belongs to the thioester dehydratase family. FabZ subfamily.

It localises to the cytoplasm. The enzyme catalyses a (3R)-hydroxyacyl-[ACP] = a (2E)-enoyl-[ACP] + H2O. Its function is as follows. Involved in unsaturated fatty acids biosynthesis. Catalyzes the dehydration of short chain beta-hydroxyacyl-ACPs and long chain saturated and unsaturated beta-hydroxyacyl-ACPs. The polypeptide is 3-hydroxyacyl-[acyl-carrier-protein] dehydratase FabZ (Cereibacter sphaeroides (strain ATCC 17025 / ATH 2.4.3) (Rhodobacter sphaeroides)).